Reading from the N-terminus, the 72-residue chain is Translation initiation factor IF-1 (72 aa).

The S1-like domain occupies 1 to 72 (MSKEDMIEFS…TKGRITFRFK (72 aa)).

The protein belongs to the IF-1 family. As to quaternary structure, component of the 30S ribosomal translation pre-initiation complex which assembles on the 30S ribosome in the order IF-2 and IF-3, IF-1 and N-formylmethionyl-tRNA(fMet); mRNA recruitment can occur at any time during PIC assembly.

Its subcellular location is the cytoplasm. Functionally, one of the essential components for the initiation of protein synthesis. Stabilizes the binding of IF-2 and IF-3 on the 30S subunit to which N-formylmethionyl-tRNA(fMet) subsequently binds. Helps modulate mRNA selection, yielding the 30S pre-initiation complex (PIC). Upon addition of the 50S ribosomal subunit IF-1, IF-2 and IF-3 are released leaving the mature 70S translation initiation complex. This Acidiphilium cryptum (strain JF-5) protein is Translation initiation factor IF-1.